The chain runs to 1191 residues: uncharacterized protein (1191 aa).

WD repeat units lie at residues 558–588, 599–629, 640–670, 682–712, 723–753, 764–794, 805–835, 995–1025, 1036–1066, 1077–1107, and 1118–1148; these read GHRD…HLWT, GHTG…KIWD, GHQD…RLWH, GHTK…RLWD, LPEV…RLWT, GHDE…IHWS, GYPE…KVWD, QRKE…TLWN, AHGD…KIWS, SDPL…RLWD, and STSG…QSWP.

This is an uncharacterized protein from Synechocystis sp. (strain ATCC 27184 / PCC 6803 / Kazusa).